The primary structure comprises 352 residues: uncharacterized protein (352 aa).

N-linked (GlcNAc...) asparagine glycans are attached at residues Asn14, Asn52, and Asn70. Residues 41 to 73 (LSDYKKNKDTLNNSNNNINQPFENSNNFNNNSK) are disordered. The segment covering 50-72 (TLNNSNNNINQPFENSNNFNNNS) has biased composition (low complexity). Residues 131-151 (IIFKSSGLLITLLVLYLGTFF) traverse the membrane as a helical segment. N-linked (GlcNAc...) asparagine glycosylation is found at Asn165, Asn186, Asn192, Asn193, Asn203, and Asn289. Over residues 193–213 (NSSNSNNNNINNSNNNNNNNN) the composition is skewed to low complexity. Residues 193 to 219 (NSSNSNNNNINNSNNNNNNNNRILSPN) form a disordered region.

It is found in the membrane. This is an uncharacterized protein from Dictyostelium discoideum (Social amoeba).